A 642-amino-acid polypeptide reads, in one-letter code: Regulator of MON1-CCZ1 complex (642 aa).

Residues 462–616 (RPYTESILML…KLYETLSFPK (155 aa)) form the Mic1 domain.

The protein belongs to the RMC1 family. Component of the Mon1-Ccz1 guanyl-nucleotide exchange factor complex made up of Mon1, Ccz1 and Bulli; the interaction of Bulli with the Mon1-Ccz1 heterodimer is mediated via the C-terminal Mic1 domain of Bulli. Mon1 and Ccz1 form a stable complex which displays Rab7 GEF activity with or without Bulli; GEF activity is enhanced by Bulli possibly by improving membrane association of the complex.

Its subcellular location is the late endosome. In terms of biological role, positive regulator of the Rab7 guanyl-nucleotide exchange activity of the Mon1-Ccz1 complex, possibly by enhancing its endosomal membrane association. As part of the Mon1-Ccz1 complex involved in endolysosomal biogenesis possibly by mediating Rab conversion, the replacement of Rab5 with Rab7 during late endosome maturation. The sequence is that of Regulator of MON1-CCZ1 complex from Drosophila melanogaster (Fruit fly).